The sequence spans 274 residues: uncharacterized protein (274 aa).

Residues 1-17 (MTQLTNFSESFSNQNSN) show a composition bias toward low complexity. 2 disordered regions span residues 1 to 38 (MTQLTNFSESFSNQNSNLHQPYNFNSHQPPEENHYYVR) and 222 to 274 (ELGT…MEFE). Positions 18–28 (LHQPYNFNSHQ) are enriched in polar residues. The segment covering 29-38 (PPEENHYYVR) has biased composition (basic and acidic residues). Polar residues-rich tracts occupy residues 239–249 (PMASPTGSSQI) and 256–265 (SPNSLTNGSV).

This is an uncharacterized protein from Caenorhabditis elegans.